The primary structure comprises 477 residues: Myosin-binding protein H (477 aa).

The disordered stretch occupies residues 1 to 73 (MMEKNTSEGP…APPSEDVPSA (73 aa)). Phosphothreonine occurs at positions 6 and 26. The Fibronectin type-III 1 domain occupies 73–168 (APLLLTLDDV…LDQPIHIREN (96 aa)). The 89-residue stretch at 172–260 (PKIRVPRHLR…EDLEAKAVID (89 aa)) folds into the Ig-like C2-type 1 domain. In terms of domain architecture, Fibronectin type-III 2 spans 269–364 (PPSSIRLLDV…TKELAHIQKA (96 aa)). Residues 382–466 (PSFTQPLADH…INVLGEASVD (85 aa)) form the Ig-like C2-type 2 domain.

The protein belongs to the immunoglobulin superfamily. MyBP family. As to expression, mainly expressed in the skeletal muscle. Slightly expressed in the left atrium and arteria mammaria interna.

Binds to myosin; probably involved in interaction with thick myofilaments in the A-band. The polypeptide is Myosin-binding protein H (MYBPH) (Homo sapiens (Human)).